Here is a 62-residue protein sequence, read N- to C-terminus: Small ribosomal subunit protein uS14 (62 aa).

C25, C28, C41, and C44 together coordinate Zn(2+).

It belongs to the universal ribosomal protein uS14 family. Zinc-binding uS14 subfamily. Part of the 30S ribosomal subunit. Contacts proteins S3 and S10. It depends on Zn(2+) as a cofactor.

Functionally, binds 16S rRNA, required for the assembly of 30S particles and may also be responsible for determining the conformation of the 16S rRNA at the A site. The chain is Small ribosomal subunit protein uS14 from Persephonella marina (strain DSM 14350 / EX-H1).